Consider the following 469-residue polypeptide: Neuraminidase (469 aa).

Residues 1 to 9 (MNPNQKIIT) lie on the Intravirion side of the membrane. Residues 10–30 (IGSVSLIIATICFLMQIAILV) form a helical membrane-spanning segment. Residues 11–33 (GSVSLIIATICFLMQIAILVTTV) are involved in apical transport and lipid raft association. Topologically, residues 31–469 (TTVTLHFKQY…DGADINLMPI (439 aa)) are virion surface. A hypervariable stalk region region spans residues 36–88 (HFKQYECDSPANNQVMPCEPIIIERNITEIVYLTNTTIEKEICPKLVEYRNWS). 3 N-linked (GlcNAc...) asparagine; by host glycosylation sites follow: asparagine 61, asparagine 70, and asparagine 86. The segment at 91-469 (QCKITGFAPF…DGADINLMPI (379 aa)) is head of neuraminidase. 8 cysteine pairs are disulfide-bonded: cysteine 92–cysteine 417, cysteine 124–cysteine 129, cysteine 183–cysteine 230, cysteine 232–cysteine 237, cysteine 278–cysteine 291, cysteine 280–cysteine 289, cysteine 318–cysteine 337, and cysteine 421–cysteine 447. Residue arginine 118 coordinates substrate. The N-linked (GlcNAc...) asparagine; by host glycan is linked to asparagine 146. The active-site Proton donor/acceptor is the aspartate 151. Arginine 152 contributes to the substrate binding site. 2 N-linked (GlcNAc...) asparagine; by host glycosylation sites follow: asparagine 200 and asparagine 234. Residue 276 to 277 (EE) participates in substrate binding. Arginine 292 is a binding site for substrate. Ca(2+) is bound by residues aspartate 293, glycine 297, and aspartate 324. Arginine 371 provides a ligand contact to substrate. N-linked (GlcNAc...) asparagine; by host glycosylation occurs at asparagine 402. The active-site Nucleophile is tyrosine 406.

The protein belongs to the glycosyl hydrolase 34 family. In terms of assembly, homotetramer. Requires Ca(2+) as cofactor. N-glycosylated.

The protein localises to the virion membrane. It localises to the host apical cell membrane. The catalysed reaction is Hydrolysis of alpha-(2-&gt;3)-, alpha-(2-&gt;6)-, alpha-(2-&gt;8)- glycosidic linkages of terminal sialic acid residues in oligosaccharides, glycoproteins, glycolipids, colominic acid and synthetic substrates.. Its activity is regulated as follows. Inhibited by the neuraminidase inhibitors zanamivir (Relenza) and oseltamivir (Tamiflu). These drugs interfere with the release of progeny virus from infected cells and are effective against all influenza strains. Resistance to neuraminidase inhibitors is quite rare. Its function is as follows. Catalyzes the removal of terminal sialic acid residues from viral and cellular glycoconjugates. Cleaves off the terminal sialic acids on the glycosylated HA during virus budding to facilitate virus release. Additionally helps virus spread through the circulation by further removing sialic acids from the cell surface. These cleavages prevent self-aggregation and ensure the efficient spread of the progeny virus from cell to cell. Otherwise, infection would be limited to one round of replication. Described as a receptor-destroying enzyme because it cleaves a terminal sialic acid from the cellular receptors. May facilitate viral invasion of the upper airways by cleaving the sialic acid moieties on the mucin of the airway epithelial cells. Likely to plays a role in the budding process through its association with lipid rafts during intracellular transport. May additionally display a raft-association independent effect on budding. Plays a role in the determination of host range restriction on replication and virulence. Sialidase activity in late endosome/lysosome traffic seems to enhance virus replication. The chain is Neuraminidase from Aves (whales).